Reading from the N-terminus, the 70-residue chain is Large ribosomal subunit protein uL29 (70 aa).

This sequence belongs to the universal ribosomal protein uL29 family.

This Gloeobacter violaceus (strain ATCC 29082 / PCC 7421) protein is Large ribosomal subunit protein uL29.